A 1213-amino-acid polypeptide reads, in one-letter code: DNA-directed RNA polymerase subunit beta' (1213 aa).

Positions 60, 62, 75, and 78 each coordinate Zn(2+). Mg(2+) contacts are provided by aspartate 450, aspartate 452, and aspartate 454. The Zn(2+) site is built by cysteine 819, cysteine 893, cysteine 900, and cysteine 903.

The protein belongs to the RNA polymerase beta' chain family. As to quaternary structure, the RNAP catalytic core consists of 2 alpha, 1 beta, 1 beta' and 1 omega subunit. When a sigma factor is associated with the core the holoenzyme is formed, which can initiate transcription. Requires Mg(2+) as cofactor. Zn(2+) serves as cofactor.

It carries out the reaction RNA(n) + a ribonucleoside 5'-triphosphate = RNA(n+1) + diphosphate. Its function is as follows. DNA-dependent RNA polymerase catalyzes the transcription of DNA into RNA using the four ribonucleoside triphosphates as substrates. The polypeptide is DNA-directed RNA polymerase subunit beta' (Streptococcus pyogenes serotype M28 (strain MGAS6180)).